A 302-amino-acid chain; its full sequence is uncharacterized protein (302 aa).

9 consecutive transmembrane segments (helical) span residues 10–30 (VLSV…GVLG), 65–85 (LVLI…IAYL), 102–122 (VAAA…GIFG), 130–150 (IFYD…LSHI), 162–182 (AVFF…LWGL), 190–210 (ILGY…GLTL), 224–244 (LVSG…SYVL), 251–271 (FSVT…VLAI), and 282–302 (SCIF…SVVL).

This sequence belongs to the auxin efflux carrier (TC 2.A.69) family.

It localises to the cell membrane. This is an uncharacterized protein from Methanothermobacter thermautotrophicus (strain ATCC 29096 / DSM 1053 / JCM 10044 / NBRC 100330 / Delta H) (Methanobacterium thermoautotrophicum).